We begin with the raw amino-acid sequence, 79 residues long: Defensin-1 (79 aa).

The signal sequence occupies residues methionine 1 to alanine 23. 3 cysteine pairs are disulfide-bonded: cysteine 42–cysteine 69, cysteine 55–cysteine 75, and cysteine 59–cysteine 77.

The protein belongs to the invertebrate defensin family. Type 1 subfamily.

Its subcellular location is the secreted. The chain is Defensin-1 (SMD1) from Stomoxys calcitrans (Stable fly).